The primary structure comprises 633 residues: CDK5 and ABL1 enzyme substrate 1 (633 aa).

The span at 1 to 29 (MAAAAAAATTAACSSGSAGTDAAGASGLQ) shows a compositional bias: low complexity. A disordered region spans residues 1 to 99 (MAAAAAAATT…EGGAAKPGAG (99 aa)). Residues 1–109 (MAAAAAAATT…GACGARTRFS (109 aa)) are interaction with TDRD7. The span at 51-61 (PPRKPRMDPRR) shows a compositional bias: basic and acidic residues. A phosphoserine mark is found at S168 and S287. Positions 179–492 (QWQPPRPAPL…TTVIDYVKPS (314 aa)) are interaction with CDK3. Phosphoserine; by CDK2 and CDK3 is present on S313. The residue at position 415 (T415) is a Phosphothreonine.

Belongs to the cyclin family. In terms of assembly, found in a complex with p53/TP53. Found in a number of complexes with CDK2, CDK3, CDK5, ABL1, TDRD7, CDK17, CCNA1, CCNE1 and TP73. Interacts with CDK2, CDK3, CDK5, ABL1 and TDRD7. In terms of processing, phosphorylated on Ser-313 by CCNE1/CDK3. Phosphorylated on serine/threonine residues by CDK5 and on tyrosine residues by ABL1. Also phosphorylated in vitro by CCNA1/CDK2, CCNE1/CDK2, CCNA1/CDK3 and CCNE1/CDK3. As to expression, expressed in breast, pancreas, colon, head and neck (at protein level). Strongly decreased in more than half of cases of atypical endometrial hyperplasia and in more than 90% of endometrial cancers.

It is found in the nucleus. The protein localises to the cytoplasm. Functionally, cyclin-dependent kinase binding protein. Enhances cyclin-dependent kinase tyrosine phosphorylation by nonreceptor tyrosine kinases, such as that of CDK5 by activated ABL1, which leads to increased CDK5 activity and is critical for neuronal development, and that of CDK2 by WEE1, which leads to decreased CDK2 activity and growth inhibition. Positively affects neuronal outgrowth. Plays a role as a regulator for p53/p73-induced cell death. In Homo sapiens (Human), this protein is CDK5 and ABL1 enzyme substrate 1 (CABLES1).